Reading from the N-terminus, the 1448-residue chain is Sister chromatid cohesion protein PDS5 homolog B-A (1448 aa).

An HEAT repeat occupies 383–419 (LLVNDQLLNFVRERTLDKRWRVRKEAMMGLAQIYKKY). Polar residues predominate over residues 1141–1155 (AGKQMLSKSSRMETV). A disordered region spans residues 1141 to 1448 (AGKQMLSKSS…TGRLRSAKKR (308 aa)). A compositionally biased stretch (low complexity) spans 1156 to 1168 (SNASSGSNPSSPG). The span at 1177–1186 (MELDQSENED) shows a compositional bias: acidic residues. Basic and acidic residues-rich tracts occupy residues 1196 to 1214 (KKSD…LEKP), 1233 to 1243 (ELSKPAQEPKS), and 1264 to 1273 (WQEKRLKEDL). The segment covering 1285–1294 (KKGRRGRPPK) has biased composition (basic residues). Positions 1286-1298 (KGRRGRPPKSAKM) form a DNA-binding region, a.T hook 1. The segment covering 1324-1341 (PTDEDDHLEISEEQDFEN) has biased composition (acidic residues). Residues 1346–1356 (RKGRGSSRRTP) show a composition bias toward basic residues. 2 DNA-binding regions (a.T hook) span residues 1374-1386 (QKRR…TPTV) and 1390-1402 (KSHV…VVSK). Residues 1389–1399 (KKSHVGRPRKV) are compositionally biased toward basic residues.

The protein belongs to the PDS5 family. In terms of assembly, interacts with the cohesin complex. Post-translationally, phosphorylated in mitotic cells.

Its subcellular location is the nucleus. Functionally, plays a role in androgen-induced proliferative arrest. Required for maintenance of sister chromatid cohesion during mitosis. The sequence is that of Sister chromatid cohesion protein PDS5 homolog B-A (pds5b-a) from Xenopus laevis (African clawed frog).